The sequence spans 133 residues: Small ribosomal subunit protein uS8 (133 aa).

This sequence belongs to the universal ribosomal protein uS8 family. In terms of assembly, part of the 30S ribosomal subunit. Contacts proteins S5 and S12.

Its function is as follows. One of the primary rRNA binding proteins, it binds directly to 16S rRNA central domain where it helps coordinate assembly of the platform of the 30S subunit. This Rhodopirellula baltica (strain DSM 10527 / NCIMB 13988 / SH1) protein is Small ribosomal subunit protein uS8.